Consider the following 115-residue polypeptide: Large ribosomal subunit protein bL19 (115 aa).

The protein belongs to the bacterial ribosomal protein bL19 family.

In terms of biological role, this protein is located at the 30S-50S ribosomal subunit interface and may play a role in the structure and function of the aminoacyl-tRNA binding site. The protein is Large ribosomal subunit protein bL19 of Tropheryma whipplei (strain TW08/27) (Whipple's bacillus).